A 585-amino-acid chain; its full sequence is Rab GTPase-binding effector protein 2 (585 aa).

A2 carries the N-acetylalanine modification. A coiled-coil region spans residues 27-183; it reads QEGAKVEAES…ELIQEIQRRP (157 aa). Disordered regions lie at residues 178 to 265, 381 to 408, and 491 to 515; these read EIQR…ASLV, ENQG…EESL, and EEQS…EEAQ. A phosphoserine mark is found at S188, S192, S198, and S202. The stretch at 288 to 540 forms a coiled coil; it reads NQWEQLQLEG…QAELETSEQV (253 aa). The segment covering 491–501 has biased composition (basic and acidic residues); sequence EEQSKAKRQEV.

This sequence belongs to the rabaptin family. In terms of assembly, heterodimer with RABGEF1. The dimer binds RAB5A that has been activated by GTP-binding. Interacts with SDCCAG8; this interaction is important for ciliogenesis regulation. Interacts with RAB4; this interaction may mediate VEGFR2 cell surface expression.

Its subcellular location is the cytoplasm. It is found in the early endosome. The protein localises to the cytoskeleton. It localises to the microtubule organizing center. The protein resides in the centrosome. Its subcellular location is the cilium basal body. Functionally, plays a role in membrane trafficking and in homotypic early endosome fusion. Participates in arteriogenesis by regulating vascular endothelial growth factor receptor 2/VEGFR2 cell surface expression and endosomal trafficking. By interacting with SDCCAG8, localizes to centrosomes and plays a critical role in ciliogenesis. The protein is Rab GTPase-binding effector protein 2 (RABEP2) of Bos taurus (Bovine).